A 103-amino-acid polypeptide reads, in one-letter code: Large ribosomal subunit protein bL21 (103 aa).

Belongs to the bacterial ribosomal protein bL21 family. In terms of assembly, part of the 50S ribosomal subunit. Contacts protein L20.

Functionally, this protein binds to 23S rRNA in the presence of protein L20. The chain is Large ribosomal subunit protein bL21 from Paracidovorax citrulli (strain AAC00-1) (Acidovorax citrulli).